The following is a 476-amino-acid chain: Calcium/calmodulin-dependent protein kinase type 1G (476 aa).

The Protein kinase domain maps to 23–277 (FIFMEVLGSG…CEKALRHPWI (255 aa)). Residues 29-37 (LGSGAFSEV) and lysine 52 each bind ATP. The active-site Proton acceptor is the aspartate 143. The autoinhibitory domain stretch occupies residues 277–317 (IDGNTALHRDIYPSVSLQIQKNFAKSKWRQAFNAAAVVHHM). A calmodulin-binding region spans residues 297-318 (KNFAKSKWRQAFNAAAVVHHMR). The segment at 326 to 387 (SPSVRQEVEN…SSRPSAPGGR (62 aa)) is disordered.

Belongs to the protein kinase superfamily. CAMK Ser/Thr protein kinase family. CaMK subfamily. Prenylated on Cys-473.

Its subcellular location is the cytoplasm. It is found in the golgi apparatus membrane. The protein localises to the cell membrane. The catalysed reaction is L-seryl-[protein] + ATP = O-phospho-L-seryl-[protein] + ADP + H(+). It catalyses the reaction L-threonyl-[protein] + ATP = O-phospho-L-threonyl-[protein] + ADP + H(+). Activated by Ca(2+)/calmodulin. Binding of calmodulin is thought to result in a conformational change and leads to activation through phosphorylation by CAMKK1. In terms of biological role, calcium/calmodulin-dependent protein kinase belonging to a proposed calcium-triggered signaling cascade. In vitro phosphorylates transcription factor CREB1. This Rattus norvegicus (Rat) protein is Calcium/calmodulin-dependent protein kinase type 1G (Camk1g).